The chain runs to 118 residues: Non-specific lipid-transfer protein 5 (118 aa).

Residues 1–25 (MEGLLKLSTLVIVCMLVTAPMASEA) form the signal peptide. 4 cysteine pairs are disulfide-bonded: Cys29-Cys76, Cys39-Cys53, Cys54-Cys100, and Cys74-Cys114.

Belongs to the plant LTP family.

Plant non-specific lipid-transfer proteins transfer phospholipids as well as galactolipids across membranes. May play a role in wax or cutin deposition in the cell walls of expanding epidermal cells and certain secretory tissues. This is Non-specific lipid-transfer protein 5 (LTP5) from Arabidopsis thaliana (Mouse-ear cress).